Here is a 109-residue protein sequence, read N- to C-terminus: uncharacterized protein (109 aa).

Residues 82–102 (SLSFLLLLFFYFNNYYFLSMT) traverse the membrane as a helical segment.

The protein resides in the membrane. This is an uncharacterized protein from Saccharomyces cerevisiae (strain ATCC 204508 / S288c) (Baker's yeast).